A 322-amino-acid chain; its full sequence is Atrochrysone carboxyl ACP thioesterase dmxR1 (322 aa).

4 residues coordinate Zn(2+): H105, H107, D109, and H110. D109 acts as the Proton donor/acceptor in catalysis.

Belongs to the metallo-beta-lactamase superfamily. The cofactor is Zn(2+).

It carries out the reaction atrochrysone carboxyl-[ACP] + H2O = atrochrysone carboxylate + holo-[ACP] + H(+). The protein operates within secondary metabolite biosynthesis. Its function is as follows. Atrochrysone carboxyl ACP thioesterase; part of the gene cluster that mediates the biosynthesis of the dimeric xanthones cryptosporioptides. The pathway begins with the synthesis of atrochrysone thioester by the polyketide synthase dmx-nrPKS. The atrochrysone carboxyl ACP thioesterase dmxR1 then breaks the thioester bond and releases the atrochrysone carboxylic acid from dmx-nrPKS. Atrochrysone carboxylic acid is decarboxylated by the decarboxylase dmxR15, and oxidized by the anthrone oxygenase dmxR16 to yield emodin. Emodin is then reduced to emodin hydroquinone by the oxidoreductase dmxR7. A-ring reduction by the short chain dehydrogenase dmxR18, dehydration by the scytalone dehydratase-like protein dmxR17 and probable spontaneous re-oxidation, results in overall deoxygenation to chrysophanol. Baeyer-Villiger oxidation by the Baeyer-Villiger monooxygenase (BVMO) dmxR6 then yields monodictylactone in equilibrium with monodictyphenone. In the case of the cryptosporioptides biosynthesis, monodictylactone is reduced at C-12 to an alcohol (by the short chain dehydrogenases dmxR12 or dmxR8) and hydroxylated at C-5 by dmxR9, yielding the electron-rich aromatic which could eliminate H(2)O to form the ortho-quinonemethide, followed by tautomerisation to paraquinone and complete the formal reduction to produce the 10-methylgroup. Conjugate addition of C-4a-OH to the resulting paraquinone by the monooxygenase dmxR10 then gives cyclohexadienone, which is then reduced at C-5 by the short chain dehydrogenase dmxR3 to give the dihydroxanthone. The 6,7-epoxide in the cryptosporioptides could be introduced by the cytochrome P450 monooxygenase dmxL3. The highly reducing PKS dmxL2 manufactures butyrate, which is further carboxylated by dmxL1 to form ethylmalonate. It is not yet clear whether the carboxylation occurs while the butyrate is attached to the ACP of dmxL2, but this unusual fungal metabolite could then be esterified to O-5 by the O-acetyltransferase dmxR13. Finally, dimerization performed by dmxR5 gives the observed dimers cryptosporioptides A, B and C as the final products of the pathway. The polypeptide is Atrochrysone carboxyl ACP thioesterase dmxR1 (Cryptosporiopsis sp. (strain 8999)).